Reading from the N-terminus, the 490-residue chain is Cytochrome P450 71A21 (490 aa).

Residues 1–21 (MESMTMIILQSLIIFITILFF) traverse the membrane as a helical segment. A heme-binding site is contributed by Cys432.

This sequence belongs to the cytochrome P450 family. The cofactor is heme.

The protein resides in the membrane. The protein is Cytochrome P450 71A21 (CYP71A21) of Arabidopsis thaliana (Mouse-ear cress).